A 456-amino-acid chain; its full sequence is Dolichyl-diphosphooligosaccharide--protein glycosyltransferase 48 kDa subunit (456 aa).

The first 42 residues, 1-42 (MGYFRCARAGSFGRRRKMEPSTAARAWALFWLLLPLLGAVCA), serve as a signal peptide directing secretion. The Lumenal portion of the chain corresponds to 43–427 (SGPRTLVLLD…YERFIPSAYP (385 aa)). Residues 428–447 (YYASAFSMMLGLFIFSIVFL) form a helical membrane-spanning segment. The Cytoplasmic portion of the chain corresponds to 448–456 (HMKEKEKSD).

It belongs to the DDOST 48 kDa subunit family. As to quaternary structure, component of the oligosaccharyltransferase (OST) complex. OST exists in two different complex forms which contain common core subunits RPN1, RPN2, OST48, OST4, DAD1 and TMEM258, either STT3A or STT3B as catalytic subunits, and form-specific accessory subunits. STT3A complex assembly occurs through the formation of 3 subcomplexes. Subcomplex 1 contains RPN1 and TMEM258, subcomplex 2 contains the STT3A-specific subunits STT3A, DC2/OSTC, and KCP2 as well as the core subunit OST4, and subcomplex 3 contains RPN2, DAD1, and OST48. The STT3A complex can form stable complexes with the Sec61 complex or with both the Sec61 and TRAP complexes. Interacts with SMIM22.

It is found in the endoplasmic reticulum membrane. The protein operates within protein modification; protein glycosylation. Functionally, subunit of the oligosaccharyl transferase (OST) complex that catalyzes the initial transfer of a defined glycan (Glc(3)Man(9)GlcNAc(2) in eukaryotes) from the lipid carrier dolichol-pyrophosphate to an asparagine residue within an Asn-X-Ser/Thr consensus motif in nascent polypeptide chains, the first step in protein N-glycosylation. N-glycosylation occurs cotranslationally and the complex associates with the Sec61 complex at the channel-forming translocon complex that mediates protein translocation across the endoplasmic reticulum (ER). All subunits are required for a maximal enzyme activity. Required for the assembly of both SST3A- and SS3B-containing OST complexes. The sequence is that of Dolichyl-diphosphooligosaccharide--protein glycosyltransferase 48 kDa subunit from Homo sapiens (Human).